Consider the following 147-residue polypeptide: Small ribosomal subunit protein uS9 (147 aa).

It belongs to the universal ribosomal protein uS9 family.

In Dictyostelium discoideum (Social amoeba), this protein is Small ribosomal subunit protein uS9 (rps16).